We begin with the raw amino-acid sequence, 373 residues long: ATP phosphoribosyltransferase regulatory subunit (373 aa).

Belongs to the class-II aminoacyl-tRNA synthetase family. HisZ subfamily. In terms of assembly, heteromultimer composed of HisG and HisZ subunits.

The protein localises to the cytoplasm. It functions in the pathway amino-acid biosynthesis; L-histidine biosynthesis; L-histidine from 5-phospho-alpha-D-ribose 1-diphosphate: step 1/9. In terms of biological role, required for the first step of histidine biosynthesis. May allow the feedback regulation of ATP phosphoribosyltransferase activity by histidine. The sequence is that of ATP phosphoribosyltransferase regulatory subunit from Rhizobium etli (strain ATCC 51251 / DSM 11541 / JCM 21823 / NBRC 15573 / CFN 42).